Reading from the N-terminus, the 356-residue chain is TPR repeat-containing protein P27G11.02 (356 aa).

A mitochondrion-targeting transit peptide spans 1–20; sequence MRMQWIWKSRRSLQNVFIRR. 2 TPR repeats span residues 194 to 227 and 290 to 323; these read SRLFEQSATLYFQAGTPSYAVPLYHEALNLTMAN and AAAFYTLGQIAERQGNIDLALKHYKNSEALRKDD.

Its subcellular location is the mitochondrion. The polypeptide is TPR repeat-containing protein P27G11.02 (Schizosaccharomyces pombe (strain 972 / ATCC 24843) (Fission yeast)).